Reading from the N-terminus, the 651-residue chain is L-type lectin-domain containing receptor kinase IX.1 (651 aa).

The first 19 residues, 1 to 19 (MANSILLFSFVLVLPFVCS), serve as a signal peptide directing secretion. Residues 20-251 (VQFNISRFGS…GNRLLSWEFS (232 aa)) are legume-lectin like. At 20–269 (VQFNISRFGS…KKSQNDKKGM (250 aa)) the chain is on the extracellular side. Residues Asn23, Asn125, Asn129, Asn162, Asn169, Asn174, Asn195, and Asn211 are each glycosylated (N-linked (GlcNAc...) asparagine). Residues 270 to 290 (IIGISVSGFVLLTFFITSLIV) form a helical membrane-spanning segment. At 291-651 (FLKRKQQKKK…VTFSSAQHGR (361 aa)) the chain is on the cytoplasmic side. One can recognise a Protein kinase domain in the interval 335–616 (FADDRKLGEG…LNLEAPVPHL (282 aa)). Residues 341-349 (LGEGGFGAV) and Lys364 each bind ATP. Asp459 acts as the Proton acceptor in catalysis. A disordered region spans residues 630 to 651 (SNTTSVSSGGATVTFSSAQHGR).

It in the C-terminal section; belongs to the protein kinase superfamily. Ser/Thr protein kinase family. The protein in the N-terminal section; belongs to the leguminous lectin family. In terms of assembly, interacts with ABCG40.

Its subcellular location is the cell membrane. It carries out the reaction L-seryl-[protein] + ATP = O-phospho-L-seryl-[protein] + ADP + H(+). The enzyme catalyses L-threonyl-[protein] + ATP = O-phospho-L-threonyl-[protein] + ADP + H(+). Promotes hydrogen peroxide H(2)O(2) production and cell death. Functionally, involved in resistance response to the pathogenic oomycetes Phytophthora infestans and Phytophthora capsici. This chain is L-type lectin-domain containing receptor kinase IX.1, found in Arabidopsis thaliana (Mouse-ear cress).